A 210-amino-acid polypeptide reads, in one-letter code: HTH-type transcriptional repressor FabR (210 aa).

The 61-residue stretch at 10 to 70 (KTRRSLVEAA…TMVDESGLML (61 aa)) folds into the HTH tetR-type domain. Positions 33–52 (SLREVAREAGIAPTSFYRHF) form a DNA-binding region, H-T-H motif.

As to quaternary structure, homodimer.

The protein localises to the cytoplasm. Represses the transcription of fabB, involved in unsaturated fatty acid (UFA) biosynthesis. By controlling UFA production, FabR directly influences the physical properties of the membrane bilayer. The chain is HTH-type transcriptional repressor FabR from Salmonella choleraesuis (strain SC-B67).